We begin with the raw amino-acid sequence, 348 residues long: MNDRQAALDQALKQIEKQFGKGSIMKLGEHSDQNISTISSGSLALDIALGVGGYPRGRIIEVYGPESSGKTTVALHAIAEVQAQGGTAAFIDAEHALDPAYAKNLGVNIDELLLSQPDTGEQALEIAEALVRSGAVDMLVIDSVAALVPRAEIEGEMGDAHVGLQARLMSQALRKLSGAINKSKTIAIFINQIREKVGVMFGNPEITPGGRALKFYSTVRLEVRRAEQLKQGTDVMGNKTKIKVVKNKVAPPFRIAEVDIMYGEGISREGELVDMAAEVDVINKSGSWYSYKEERIGQGRENAKQYLKEHTDIRDEISKRVREEYEIDGSNKEPLAETEETLSLLDDE.

64–71 (GPESSGKT) is an ATP binding site. The span at 324–335 (EYEIDGSNKEPL) shows a compositional bias: basic and acidic residues. Positions 324–348 (EYEIDGSNKEPLAETEETLSLLDDE) are disordered. Acidic residues predominate over residues 336–348 (AETEETLSLLDDE).

It belongs to the RecA family.

The protein resides in the cytoplasm. In terms of biological role, can catalyze the hydrolysis of ATP in the presence of single-stranded DNA, the ATP-dependent uptake of single-stranded DNA by duplex DNA, and the ATP-dependent hybridization of homologous single-stranded DNAs. It interacts with LexA causing its activation and leading to its autocatalytic cleavage. This chain is Protein RecA, found in Listeria ivanovii.